Here is a 425-residue protein sequence, read N- to C-terminus: Serine hydroxymethyltransferase (425 aa).

(6S)-5,6,7,8-tetrahydrofolate-binding positions include L126 and 130 to 132 (GHL). Position 234 is an N6-(pyridoxal phosphate)lysine (K234).

The protein belongs to the SHMT family. In terms of assembly, homodimer. It depends on pyridoxal 5'-phosphate as a cofactor.

It localises to the cytoplasm. The enzyme catalyses (6R)-5,10-methylene-5,6,7,8-tetrahydrofolate + glycine + H2O = (6S)-5,6,7,8-tetrahydrofolate + L-serine. It participates in one-carbon metabolism; tetrahydrofolate interconversion. Its pathway is amino-acid biosynthesis; glycine biosynthesis; glycine from L-serine: step 1/1. Catalyzes the reversible interconversion of serine and glycine with tetrahydrofolate (THF) serving as the one-carbon carrier. This reaction serves as the major source of one-carbon groups required for the biosynthesis of purines, thymidylate, methionine, and other important biomolecules. Also exhibits THF-independent aldolase activity toward beta-hydroxyamino acids, producing glycine and aldehydes, via a retro-aldol mechanism. This Desulfotalea psychrophila (strain LSv54 / DSM 12343) protein is Serine hydroxymethyltransferase.